We begin with the raw amino-acid sequence, 942 residues long: UvrABC system protein A (942 aa).

Residue 31–38 participates in ATP binding; sequence GLSGSGKS. Residues 253 to 280 form a C4-type zinc finger; it reads CSECGYSLPELEPRLFSFNNPAGACPTC. ABC transporter domains follow at residues 310–586 and 606–936; these read WDRR…EASI and YDAN…RFLT. 639–646 lines the ATP pocket; it reads GVSGSGKS. The C4-type zinc finger occupies 739–765; that stretch reads CEACQGDGVIKVEMHFLPDVYVPCDHC.

The protein belongs to the ABC transporter superfamily. UvrA family. Forms a heterotetramer with UvrB during the search for lesions.

It is found in the cytoplasm. Functionally, the UvrABC repair system catalyzes the recognition and processing of DNA lesions. UvrA is an ATPase and a DNA-binding protein. A damage recognition complex composed of 2 UvrA and 2 UvrB subunits scans DNA for abnormalities. When the presence of a lesion has been verified by UvrB, the UvrA molecules dissociate. The polypeptide is UvrABC system protein A (Haemophilus ducreyi (strain 35000HP / ATCC 700724)).